A 117-amino-acid polypeptide reads, in one-letter code: Ig heavy chain V region RF (117 aa).

The signal sequence occupies residues 1-19; that stretch reads MNFGLRLIFLVLVLKGVLC. Residues 20-49 form a framework-1 region; that stretch reads DVKLVESGGGLVKLGGSLKLSCAASGFTFS. A disulfide bridge connects residues Cys41 and Cys115. Positions 50 to 54 are complementarity-determining-1; the sequence is SYYMS. Residues 55–68 are framework-2; the sequence is WVRQTPEKRLELVA. Positions 69–85 are complementarity-determining-2; that stretch reads AINSNGGSTYYPDTVKG. The tract at residues 86–117 is framework-3; that stretch reads RFTISRDNAKNTLYLQMSSLKSEDTALYYCAR.

This is Ig heavy chain V region RF from Mus musculus (Mouse).